The primary structure comprises 101 residues: uncharacterized protein (101 aa).

The segment covering 1 to 12 (MAAFQHRAKRSK) has biased composition (basic residues). Disordered regions lie at residues 1-30 (MAAFQHRAKRSKNGASAKQGKISKADKKRA) and 65-87 (AQDQRSDAQAQQQRAQERSNVDK). The span at 65 to 78 (AQDQRSDAQAQQQR) shows a compositional bias: low complexity.

This is an uncharacterized protein from Eremothecium gossypii (strain ATCC 10895 / CBS 109.51 / FGSC 9923 / NRRL Y-1056) (Yeast).